The chain runs to 273 residues: Homeobox protein Nkx-2.2 (273 aa).

Disordered stretches follow at residues 1–56 (MSLT…LDAV) and 91–131 (AASA…KRKR). Over residues 20–38 (DTNDEEGSVAEGPEEESEG) the composition is skewed to acidic residues. Positions 128–187 (KRKRRVLFSKAQTYELERRFRQQRYLSAPEREHLASLIRLTPTQVKIWFQNHRYKMKRAR) form a DNA-binding region, homeobox.

This sequence belongs to the NK-2 homeobox family. Interacts with OLIG2.

Its subcellular location is the nucleus. Transcriptional activator involved in the development of insulin-producting beta cells in the endocrine pancreas. May also be involved in specifying diencephalic neuromeric boundaries, and in controlling the expression of genes that play a role in axonal guidance. Binds to elements within the NEUROD1 promoter. The protein is Homeobox protein Nkx-2.2 (NKX2-2) of Mesocricetus auratus (Golden hamster).